A 638-amino-acid polypeptide reads, in one-letter code: Threonine--tRNA ligase (638 aa).

Residues 1-61 (MPDIKLPDGS…EQNADLAIIT (61 aa)) enclose the TGS domain. The interval 242–533 (DHRRLGKQYD…LIENFAGALP (292 aa)) is catalytic. Residues Cys333, His384, and His510 each contribute to the Zn(2+) site.

It belongs to the class-II aminoacyl-tRNA synthetase family. As to quaternary structure, homodimer. Zn(2+) is required as a cofactor.

The protein resides in the cytoplasm. The enzyme catalyses tRNA(Thr) + L-threonine + ATP = L-threonyl-tRNA(Thr) + AMP + diphosphate + H(+). Its function is as follows. Catalyzes the attachment of threonine to tRNA(Thr) in a two-step reaction: L-threonine is first activated by ATP to form Thr-AMP and then transferred to the acceptor end of tRNA(Thr). Also edits incorrectly charged L-seryl-tRNA(Thr). The chain is Threonine--tRNA ligase from Dechloromonas aromatica (strain RCB).